The primary structure comprises 237 residues: Demethylmenaquinone methyltransferase (237 aa).

S-adenosyl-L-methionine contacts are provided by residues Thr-58, Asp-79, and 107–108; that span reads NA.

The protein belongs to the class I-like SAM-binding methyltransferase superfamily. MenG/UbiE family.

It carries out the reaction a 2-demethylmenaquinol + S-adenosyl-L-methionine = a menaquinol + S-adenosyl-L-homocysteine + H(+). It functions in the pathway quinol/quinone metabolism; menaquinone biosynthesis; menaquinol from 1,4-dihydroxy-2-naphthoate: step 2/2. In terms of biological role, methyltransferase required for the conversion of demethylmenaquinol (DMKH2) to menaquinol (MKH2). In Lactiplantibacillus plantarum (strain ATCC BAA-793 / NCIMB 8826 / WCFS1) (Lactobacillus plantarum), this protein is Demethylmenaquinone methyltransferase.